Consider the following 362-residue polypeptide: Phosphoserine aminotransferase (362 aa).

Positions 9 and 42 each coordinate L-glutamate. Residues 76-77, W102, T153, D174, and Q197 contribute to the pyridoxal 5'-phosphate site; that span reads GR. K198 carries the post-translational modification N6-(pyridoxal phosphate)lysine. Residue 239-240 participates in pyridoxal 5'-phosphate binding; sequence NT.

The protein belongs to the class-V pyridoxal-phosphate-dependent aminotransferase family. SerC subfamily. Homodimer. It depends on pyridoxal 5'-phosphate as a cofactor.

The protein resides in the cytoplasm. The enzyme catalyses O-phospho-L-serine + 2-oxoglutarate = 3-phosphooxypyruvate + L-glutamate. It catalyses the reaction 4-(phosphooxy)-L-threonine + 2-oxoglutarate = (R)-3-hydroxy-2-oxo-4-phosphooxybutanoate + L-glutamate. The protein operates within amino-acid biosynthesis; L-serine biosynthesis; L-serine from 3-phospho-D-glycerate: step 2/3. It participates in cofactor biosynthesis; pyridoxine 5'-phosphate biosynthesis; pyridoxine 5'-phosphate from D-erythrose 4-phosphate: step 3/5. Catalyzes the reversible conversion of 3-phosphohydroxypyruvate to phosphoserine and of 3-hydroxy-2-oxo-4-phosphonooxybutanoate to phosphohydroxythreonine. The chain is Phosphoserine aminotransferase from Salmonella choleraesuis (strain SC-B67).